The following is a 374-amino-acid chain: LIM domain-binding protein 1-A (374 aa).

Disordered stretches follow at residues Met-1–His-24, Pro-249–Ser-297, and Thr-322–Gln-374. Residues Ser-267–Ser-297 are compositionally biased toward low complexity. Positions Asp-299–Glu-338 constitute an LIM interaction domain (LID) domain. Residues Phe-341–Gln-374 are compositionally biased toward polar residues.

Belongs to the LDB family. In terms of tissue distribution, expressed ubiquitously in the embryo and adult.

The protein localises to the nucleus. Functionally, binds to the LIM domain of a wide variety of LIM domain-containing transcription factors. This chain is LIM domain-binding protein 1-A (ldb1a), found in Danio rerio (Zebrafish).